A 149-amino-acid chain; its full sequence is Arginine repressor (149 aa).

The protein belongs to the ArgR family.

The protein localises to the cytoplasm. It functions in the pathway amino-acid biosynthesis; L-arginine biosynthesis [regulation]. Its function is as follows. Regulates arginine biosynthesis genes. This is Arginine repressor from Chlorobium phaeobacteroides (strain DSM 266 / SMG 266 / 2430).